The following is a 647-amino-acid chain: MTALYPAVEPAPAARPARPRSGGWLWTVPSVRWAAAALALFLTGLAAQLLGAPQAVVWTLYLACYVVGGWEPAWVGVRALRNRTLDVDLLMIVAAIGAATIGQVFDGALLIVIFATSGALEDVATTRTERSVRGLLDLAPEHATLLGDGSQRVVAAADLRPGDVIVVRPGERISADGTVIGGASEVDQSSITGEPLPAAKDVGDDVFAGTVNGSGALRVEVTREPSQTVVARIVAMVTEASATKATTQLFIEKIEQRYSAGVVVATLALLTVPLMFGADLRSTLLRAMTFMIVASPCAVVLATMPPLLSAIANASRHGVLVKSAVAMERLADTDVVVLDKTGTLTAGEPVISRVTVLIDGADVLGMAAAAEQFSEHPLGRAIVAAARGRVVPEAGDFTALPGRGVRARVAGHVVEVVSPAAYAGENAAVREHCAAIENDGGTAVVVLEDGLPVGVIGLADRLRPDAPAAVMQLAQLTKHPPMLLTGDNRRAAGRLAEEAGIADVHAELLPDGKAAAVQKLQRDNTHVLVVGDGVNDAPAMAAAHTSIAMGRAGADLTVQTADVVTIRDELATVPAVIALARRARRVVIANLVMAGAAITTLVLWDLFGQLPLPLGVAGHEGSTILVALNGLRLLSNRAWISPGATPT.

Helical transmembrane passes span 33-53 (WAAA…LGAP), 55-75 (AVVW…PAWV), 94-114 (AAIG…IVIF), 260-280 (AGVV…GADL), and 291-311 (MIVA…LSAI). Aspartate 339 acts as the 4-aspartylphosphate intermediate in catalysis. Residues aspartate 532 and aspartate 536 each coordinate Mg(2+). A helical transmembrane segment spans residues 587 to 607 (VIANLVMAGAAITTLVLWDLF).

It belongs to the cation transport ATPase (P-type) (TC 3.A.3) family. Type IB subfamily.

The protein localises to the cell membrane. It catalyses the reaction Ni(2+)(out) + ATP + H2O = Ni(2+)(in) + ADP + phosphate + H(+). It carries out the reaction Co(2+)(out) + ATP + H2O = Co(2+)(in) + ADP + phosphate + H(+). Its function is as follows. Involved in heavy metal homeostasis. Probably exports nickel and cobalt ions out of the cell. This Mycolicibacterium smegmatis (strain ATCC 700084 / mc(2)155) (Mycobacterium smegmatis) protein is Probable cobalt/nickel-exporting P-type ATPase (ctpD).